Reading from the N-terminus, the 232-residue chain is LexA repressor (232 aa).

Residues 26–46 (FDEMKDALDLRSKSGIHRLIT) constitute a DNA-binding region (H-T-H motif). Residues serine 153 and lysine 191 each act as for autocatalytic cleavage activity in the active site.

This sequence belongs to the peptidase S24 family. Homodimer.

It catalyses the reaction Hydrolysis of Ala-|-Gly bond in repressor LexA.. Functionally, represses a number of genes involved in the response to DNA damage (SOS response), including recA and lexA. In the presence of single-stranded DNA, RecA interacts with LexA causing an autocatalytic cleavage which disrupts the DNA-binding part of LexA, leading to derepression of the SOS regulon and eventually DNA repair. This is LexA repressor from Afipia carboxidovorans (strain ATCC 49405 / DSM 1227 / KCTC 32145 / OM5) (Oligotropha carboxidovorans).